The chain runs to 321 residues: Glucokinase (321 aa).

Residue 8-13 (GDVGGT) coordinates ATP.

The protein belongs to the bacterial glucokinase family.

The protein localises to the cytoplasm. The enzyme catalyses D-glucose + ATP = D-glucose 6-phosphate + ADP + H(+). In Salmonella heidelberg (strain SL476), this protein is Glucokinase.